The chain runs to 35 residues: Dermonecrotic toxin LgSicTox-beta-LOXN4 (35 aa).

D20 is a Mg(2+) binding site.

It belongs to the arthropod phospholipase D family. Class II subfamily. The cofactor is Mg(2+). Post-translationally, contains 2 disulfide bonds. As to expression, expressed by the venom gland.

The protein localises to the secreted. The catalysed reaction is an N-(acyl)-sphingosylphosphocholine = an N-(acyl)-sphingosyl-1,3-cyclic phosphate + choline. The enzyme catalyses an N-(acyl)-sphingosylphosphoethanolamine = an N-(acyl)-sphingosyl-1,3-cyclic phosphate + ethanolamine. It catalyses the reaction a 1-acyl-sn-glycero-3-phosphocholine = a 1-acyl-sn-glycero-2,3-cyclic phosphate + choline. It carries out the reaction a 1-acyl-sn-glycero-3-phosphoethanolamine = a 1-acyl-sn-glycero-2,3-cyclic phosphate + ethanolamine. Its function is as follows. Dermonecrotic toxins cleave the phosphodiester linkage between the phosphate and headgroup of certain phospholipids (sphingolipid and lysolipid substrates), forming an alcohol (often choline) and a cyclic phosphate. This toxin acts on sphingomyelin (SM). It may also act on ceramide phosphoethanolamine (CPE), lysophosphatidylcholine (LPC) and lysophosphatidylethanolamine (LPE), but not on lysophosphatidylserine (LPS), and lysophosphatidylglycerol (LPG). It acts by transphosphatidylation, releasing exclusively cyclic phosphate products as second products. Induces dermonecrosis, hemolysis, increased vascular permeability, edema, inflammatory response, and platelet aggregation. The polypeptide is Dermonecrotic toxin LgSicTox-beta-LOXN4 (Loxosceles gaucho (Spider)).